A 439-amino-acid polypeptide reads, in one-letter code: Actin-related protein 3 (439 aa).

The segment at 40–71 (PSAGTGGSGSGRPAVANKPSFLTGGAGPGGHL) is disordered.

The protein belongs to the actin family. ARP3 subfamily. Component of the Arp2/3 complex composed.

The protein localises to the cytoplasm. The protein resides in the cytoskeleton. Its function is as follows. Functions as ATP-binding component of the Arp2/3 complex which is involved in regulation of actin polymerization and together with an activating nucleation-promoting factor (NPF) mediates the formation of branched actin networks. Seems to contact the pointed end of the daughter actin filament. This is Actin-related protein 3 (arp-3) from Neurospora crassa (strain ATCC 24698 / 74-OR23-1A / CBS 708.71 / DSM 1257 / FGSC 987).